The primary structure comprises 99 residues: NADH-ubiquinone oxidoreductase chain 4L (99 aa).

The next 3 helical transmembrane spans lie at 1 to 21 (MTIY…FFTQ), 25 to 45 (ILSL…SVAV), and 56 to 76 (VMIL…SLLV).

This sequence belongs to the complex I subunit 4L family.

The protein resides in the mitochondrion membrane. It carries out the reaction a ubiquinone + NADH + 5 H(+)(in) = a ubiquinol + NAD(+) + 4 H(+)(out). Functionally, core subunit of the mitochondrial membrane respiratory chain NADH dehydrogenase (Complex I) that is believed to belong to the minimal assembly required for catalysis. Complex I functions in the transfer of electrons from NADH to the respiratory chain. The immediate electron acceptor for the enzyme is believed to be ubiquinone. The chain is NADH-ubiquinone oxidoreductase chain 4L (ND4L) from Albinaria caerulea (Land snail).